An 85-amino-acid chain; its full sequence is Putative defensin-like protein 79 (85 aa).

The N-terminal stretch at 1-31 is a signal peptide; the sequence is MKSEKSADAYGTYFLLISTIFLLFIARQASS. Disulfide bonds link Cys-37-Cys-69, Cys-44-Cys-60, Cys-47-Cys-67, and Cys-51-Cys-68.

Belongs to the DEFL family.

It localises to the secreted. This is Putative defensin-like protein 79 from Arabidopsis thaliana (Mouse-ear cress).